The primary structure comprises 324 residues: Adenine deaminase (324 aa).

Zn(2+) contacts are provided by H8, H10, and H186. E189 serves as the catalytic Proton donor. Position 267 (D267) interacts with Zn(2+). Position 268 (D268) interacts with substrate.

The protein belongs to the metallo-dependent hydrolases superfamily. Adenosine and AMP deaminases family. Adenine deaminase type 2 subfamily. Zn(2+) serves as cofactor.

It carries out the reaction adenine + H2O + H(+) = hypoxanthine + NH4(+). Catalyzes the hydrolytic deamination of adenine to hypoxanthine. Plays an important role in the purine salvage pathway and in nitrogen catabolism. This Mesorhizobium japonicum (strain LMG 29417 / CECT 9101 / MAFF 303099) (Mesorhizobium loti (strain MAFF 303099)) protein is Adenine deaminase.